The chain runs to 182 residues: Glutathione-regulated potassium-efflux system ancillary protein KefG (182 aa).

Belongs to the NAD(P)H dehydrogenase (quinone) family. KefG subfamily. Interacts with KefB.

Its subcellular location is the cell inner membrane. It carries out the reaction a quinone + NADH + H(+) = a quinol + NAD(+). The enzyme catalyses a quinone + NADPH + H(+) = a quinol + NADP(+). Regulatory subunit of a potassium efflux system that confers protection against electrophiles. Required for full activity of KefB. The protein is Glutathione-regulated potassium-efflux system ancillary protein KefG of Yersinia pseudotuberculosis serotype O:1b (strain IP 31758).